Consider the following 85-residue polypeptide: Cell division protein ZapA (85 aa).

Residues 60-85 (AVNVVHDYLKLKEELERLKGQIKEKD) adopt a coiled-coil conformation.

The protein belongs to the ZapA family. Type 2 subfamily. Homodimer. Interacts with FtsZ.

The protein resides in the cytoplasm. In terms of biological role, activator of cell division through the inhibition of FtsZ GTPase activity, therefore promoting FtsZ assembly into bundles of protofilaments necessary for the formation of the division Z ring. It is recruited early at mid-cell but it is not essential for cell division. The polypeptide is Cell division protein ZapA (Bacillus licheniformis (strain ATCC 14580 / DSM 13 / JCM 2505 / CCUG 7422 / NBRC 12200 / NCIMB 9375 / NCTC 10341 / NRRL NRS-1264 / Gibson 46)).